We begin with the raw amino-acid sequence, 591 residues long: Probable translation initiation factor IF-2 (591 aa).

Residues 7 to 223 (LRTPIVCVMG…LLGLAQKFLE (217 aa)) enclose the tr-type G domain. Positions 16-23 (GHVDHGKT) are G1. 16–23 (GHVDHGKT) contributes to the GTP binding site. The segment at 41–45 (AITQH) is G2. Residues 78–81 (DTPG) are G3. GTP contacts are provided by residues 78–82 (DTPGH) and 132–135 (NKID). The tract at residues 132-135 (NKID) is G4. The G5 stretch occupies residues 200–202 (SAM).

Belongs to the TRAFAC class translation factor GTPase superfamily. Classic translation factor GTPase family. IF-2 subfamily.

Function in general translation initiation by promoting the binding of the formylmethionine-tRNA to ribosomes. Seems to function along with eIF-2. This Methanosarcina barkeri (strain Fusaro / DSM 804) protein is Probable translation initiation factor IF-2.